Here is a 245-residue protein sequence, read N- to C-terminus: tRNA (guanine-N(1)-)-methyltransferase (245 aa).

Residues G111 and 131 to 136 contribute to the S-adenosyl-L-methionine site; that span reads IGDYVL.

It belongs to the RNA methyltransferase TrmD family. In terms of assembly, homodimer.

It localises to the cytoplasm. It carries out the reaction guanosine(37) in tRNA + S-adenosyl-L-methionine = N(1)-methylguanosine(37) in tRNA + S-adenosyl-L-homocysteine + H(+). Its function is as follows. Specifically methylates guanosine-37 in various tRNAs. The sequence is that of tRNA (guanine-N(1)-)-methyltransferase from Staphylococcus haemolyticus (strain JCSC1435).